Reading from the N-terminus, the 190-residue chain is Recombination protein RecR (190 aa).

Residues 58–73 (CTQCGGLSEDELCYIC) form a C4-type zinc finger. Residues 81–167 (SSLCLVESAR…HFTKIAQGVP (87 aa)) form the Toprim domain.

The protein belongs to the RecR family.

May play a role in DNA repair. It seems to be involved in an RecBC-independent recombinational process of DNA repair. It may act with RecF and RecO. In Nitratiruptor sp. (strain SB155-2), this protein is Recombination protein RecR.